A 1006-amino-acid polypeptide reads, in one-letter code: Probable beta-galactosidase A (1006 aa).

Residues 1–18 (MKLLSVCAIALLAAQAAG) form the signal peptide. Substrate is bound by residues tyrosine 96, asparagine 140, alanine 141, and glutamate 142. Asparagine 156 is a glycosylation site (N-linked (GlcNAc...) asparagine). Asparagine 199 is a binding site for substrate. Residue glutamate 200 is the Proton donor of the active site. Cysteine 205 and cysteine 206 are joined by a disulfide. Residue tyrosine 260 coordinates substrate. Cysteine 266 and cysteine 315 are oxidised to a cystine. Glutamate 298 serves as the catalytic Nucleophile. Residue tyrosine 364 coordinates substrate. 7 N-linked (GlcNAc...) asparagine glycosylation sites follow: asparagine 373, asparagine 402, asparagine 422, asparagine 622, asparagine 760, asparagine 777, and asparagine 914.

This sequence belongs to the glycosyl hydrolase 35 family.

It localises to the secreted. It carries out the reaction Hydrolysis of terminal non-reducing beta-D-galactose residues in beta-D-galactosides.. Cleaves beta-linked terminal galactosyl residues from gangliosides, glycoproteins, and glycosaminoglycans. The chain is Probable beta-galactosidase A (lacA) from Aspergillus fumigatus (strain ATCC MYA-4609 / CBS 101355 / FGSC A1100 / Af293) (Neosartorya fumigata).